The primary structure comprises 274 residues: Oxidized low-density lipoprotein receptor 1 (274 aa).

The disordered stretch occupies residues 1–28 (MTLDDLKSNSMKDQPDEKSNGDKAEGPR). The Cytoplasmic segment spans residues 1-37 (MTLDDLKSNSMKDQPDEKSNGDKAEGPRSLSTLRWRP). The segment covering 13-26 (DQPDEKSNGDKAEG) has biased composition (basic and acidic residues). Residues 38-60 (AALILGLLCLGLLVTVILLIIQL) traverse the membrane as a helical; Signal-anchor for type II membrane protein segment. A lipid anchor (S-palmitoyl cysteine) is attached at cysteine 46. The neck stretch occupies residues 61 to 150 (SQVSDLLKQQ…SGPCPQDWLW (90 aa)). The Extracellular portion of the chain corresponds to 61 to 274 (SQVSDLLKQQ…QKRANLLRAQ (214 aa)). Positions 89-142 (RQAEKSSQESQRELTEMIETLAHKLDEKSKKLMELQQQNLNLQKALEKAANFSG) form a coiled coil. Residue asparagine 139 is glycosylated (N-linked (GlcNAc...) asparagine). 3 disulfide bridges follow: cysteine 144–cysteine 155, cysteine 172–cysteine 264, and cysteine 243–cysteine 256. The region spanning 151–265 (HEENCYKFSS…CILNAFSICQ (115 aa)) is the C-type lectin domain.

As to quaternary structure, homodimer; disulfide-linked. May form a hexamer composed of 3 homodimers. Interacts with HSP70. In terms of processing, N-glycosylated.

The protein localises to the cell membrane. It localises to the membrane raft. The protein resides in the secreted. In terms of biological role, receptor that mediates the recognition, internalization and degradation of oxidatively modified low density lipoprotein (oxLDL) by vascular endothelial cells. OxLDL is a marker of atherosclerosis that induces vascular endothelial cell activation and dysfunction, resulting in pro-inflammatory responses, pro-oxidative conditions and apoptosis. Its association with oxLDL induces the activation of NF-kappa-B through an increased production of intracellular reactive oxygen and a variety of pro-atherogenic cellular responses including a reduction of nitric oxide (NO) release, monocyte adhesion and apoptosis. In addition to binding oxLDL, it acts as a receptor for the HSP70 protein involved in antigen cross-presentation to naive T-cells in dendritic cells, thereby participating in cell-mediated antigen cross-presentation. Also involved in inflammatory process, by acting as a leukocyte-adhesion molecule at the vascular interface in endotoxin-induced inflammation. Also acts as a receptor for advanced glycation end (AGE) products, activated platelets, monocytes, apoptotic cells and both Gram-negative and Gram-positive bacteria. In Sus scrofa (Pig), this protein is Oxidized low-density lipoprotein receptor 1 (OLR1).